Consider the following 293-residue polypeptide: MATH domain and coiled-coil domain-containing protein At3g58400 (293 aa).

Residues arginine 3 to isoleucine 126 enclose the MATH domain. Residues lysine 227 to alanine 285 are a coiled coil.

The polypeptide is MATH domain and coiled-coil domain-containing protein At3g58400 (Arabidopsis thaliana (Mouse-ear cress)).